Reading from the N-terminus, the 148-residue chain is Large ribosomal subunit protein bL9 (148 aa).

It belongs to the bacterial ribosomal protein bL9 family.

Functionally, binds to the 23S rRNA. The sequence is that of Large ribosomal subunit protein bL9 from Bacillus cereus (strain ATCC 10987 / NRS 248).